A 276-amino-acid chain; its full sequence is Rhomboid protease GlpG (276 aa).

The next 6 membrane-spanning stretches (helical) occupy residues 94-114 (GPFT…MNVV), 142-162 (ALMH…WYLG), 169-189 (LGSG…GYVQ), 192-212 (FSGP…GYAW), 229-249 (LITF…GMSI), and 250-270 (ANGA…ADTL). The active-site Nucleophile is the Ser201. The active site involves His254.

It belongs to the peptidase S54 family.

Its subcellular location is the cell inner membrane. It catalyses the reaction Cleaves type-1 transmembrane domains using a catalytic dyad composed of serine and histidine that are contributed by different transmembrane domains.. In terms of biological role, rhomboid-type serine protease that catalyzes intramembrane proteolysis. The protein is Rhomboid protease GlpG of Enterobacter sp. (strain 638).